The primary structure comprises 236 residues: SERTA domain-containing protein 1 (236 aa).

The SERTA domain maps to 38 to 85 (PTVASSSLFDLSVVKLHHSLRQSEPDLRHLVLVVNTLRRIQASMEPAP). The tract at residues 190–211 (ASEGLKPGPENGPAKEEPPELD) is disordered.

In terms of assembly, interacts with the PHD-bromodomain of TIF1, TRIM28/TIF1B and p300/CBP. Interacts with E2F1 and TFDP1; modulates transactivation activity of TFDP1/E2F complexes. Also interacts with CDK4. Polyubiquitinated, which promotes proteasomal degradation. Detected at in testis, lung and, at lower levels, in muscle, liver, spleen, brain and heart.

Acts at E2F-responsive promoters as coregulator to integrate signals provided by PHD- and/or bromodomain-containing transcription factors. Stimulates E2F1/TFDP1 transcriptional activity. Renders the activity of cyclin D1/CDK4 resistant to the inhibitory effects of CDKN2A/p16INK4A. The sequence is that of SERTA domain-containing protein 1 (Sertad1) from Mus musculus (Mouse).